The sequence spans 95 residues: Acylphosphatase (95 aa).

One can recognise an Acylphosphatase-like domain in the interval 6-94 (RVRVIVKGIV…EDFTGFSVRY (89 aa)). Residues Arg21 and Asn39 contribute to the active site.

It belongs to the acylphosphatase family.

The catalysed reaction is an acyl phosphate + H2O = a carboxylate + phosphate + H(+). The polypeptide is Acylphosphatase (acyP) (Caldivirga maquilingensis (strain ATCC 700844 / DSM 13496 / JCM 10307 / IC-167)).